The primary structure comprises 291 residues: Undecaprenyl-diphosphatase (291 aa).

8 helical membrane passes run 1–21 (MFII…LTEF), 48–68 (SAFT…AWVF), 102–122 (LHVL…DDFI), 126–146 (LFSV…MIIA), 162–182 (INYF…WPGF), 203–223 (SDFT…LSLL), 236–256 (FYIL…KTFL), and 267–287 (FAIY…GFGI).

It belongs to the UppP family.

The protein resides in the cell membrane. The catalysed reaction is di-trans,octa-cis-undecaprenyl diphosphate + H2O = di-trans,octa-cis-undecaprenyl phosphate + phosphate + H(+). Its function is as follows. Catalyzes the dephosphorylation of undecaprenyl diphosphate (UPP). Confers resistance to bacitracin. The polypeptide is Undecaprenyl-diphosphatase (Staphylococcus aureus (strain MSSA476)).